The chain runs to 282 residues: ATP phosphoribosyltransferase (282 aa).

Belongs to the ATP phosphoribosyltransferase family. Long subfamily. It depends on Mg(2+) as a cofactor.

The protein resides in the cytoplasm. It carries out the reaction 1-(5-phospho-beta-D-ribosyl)-ATP + diphosphate = 5-phospho-alpha-D-ribose 1-diphosphate + ATP. It participates in amino-acid biosynthesis; L-histidine biosynthesis; L-histidine from 5-phospho-alpha-D-ribose 1-diphosphate: step 1/9. Its activity is regulated as follows. Feedback inhibited by histidine. Catalyzes the condensation of ATP and 5-phosphoribose 1-diphosphate to form N'-(5'-phosphoribosyl)-ATP (PR-ATP). Has a crucial role in the pathway because the rate of histidine biosynthesis seems to be controlled primarily by regulation of HisG enzymatic activity. The sequence is that of ATP phosphoribosyltransferase from Haloarcula marismortui (strain ATCC 43049 / DSM 3752 / JCM 8966 / VKM B-1809) (Halobacterium marismortui).